We begin with the raw amino-acid sequence, 430 residues long: Drebrin-like protein (430 aa).

Residues 4 to 133 form the ADF-H domain; it reads NLSRNGPALQ…EPECIMEKVA (130 aa). Thr26 is modified (phosphothreonine). Residues Gly137 and Ser160 each carry the phosphoserine modification. Position 176 is an N6-acetyllysine (Lys176). Positions 176 to 231 form a coiled coil; it reads KDSFWAKAEKEEENRRLEEKRRAEEAQRQLEQERRERELREAARREQRYQEQGGEA. Ala183 and Ser232 each carry phosphoserine. Residues 219–283 are disordered; that stretch reads RREQRYQEQG…SSPQPGKLRS (65 aa). Positions 233–244 are enriched in polar residues; it reads PQRTWEQQQEVV. The segment covering 245-267 has biased composition (basic and acidic residues); the sequence is SRNRNEQESAVHPREIFKQKERA. Polar residues predominate over residues 268-277; sequence MSTTSISSPQ. Phosphoserine occurs at positions 269, 272, 275, and 283. N6-acetyllysine is present on Lys288. Position 291 is a phosphothreonine (Thr291). Tyr334 and Tyr344 each carry phosphotyrosine. An SH3 domain is found at 371 to 430; that stretch reads GQGLCARALYDYQAADDTEISFDPENLITGIEVIDEGWWRGYGPDGHFGMFPANYVELIE.

It belongs to the ABP1 family. As to quaternary structure, interacts with SHANK2, SHANK3 and SYN1. Interacts with FGD1 and DNM1. Interacts with ANKRD54. Interacts with COBL. Interacts with WASL and WIPF1. Interacts with MAP4K1 and PRAM1. Post-translationally, degraded by caspases during apoptosis.

The protein resides in the cytoplasm. Its subcellular location is the cytoskeleton. It localises to the cell projection. It is found in the lamellipodium. The protein localises to the ruffle. The protein resides in the cell cortex. Its subcellular location is the cytosol. It localises to the synapse. It is found in the perikaryon. The protein localises to the neuron projection. The protein resides in the cell membrane. Its subcellular location is the cytoplasmic vesicle. It localises to the clathrin-coated vesicle membrane. It is found in the golgi apparatus membrane. The protein localises to the podosome. The protein resides in the early endosome. Its subcellular location is the dendrite. It localises to the postsynaptic density. Functionally, adapter protein that binds F-actin and DNM1, and thereby plays a role in receptor-mediated endocytosis. Plays a role in the reorganization of the actin cytoskeleton, formation of cell projections, such as neurites, in neuron morphogenesis and synapse formation via its interaction with WASL and COBL. Does not bind G-actin and promote actin polymerization by itself. Required for the formation of organized podosome rosettes. May act as a common effector of antigen receptor-signaling pathways in leukocytes. Acts as a key component of the immunological synapse that regulates T-cell activation by bridging TCRs and the actin cytoskeleton to gene activation and endocytic processes. The polypeptide is Drebrin-like protein (DBNL) (Homo sapiens (Human)).